The following is a 398-amino-acid chain: Nicotinate phosphoribosyltransferase (398 aa).

Residue His-214 is modified to Phosphohistidine; by autocatalysis.

Belongs to the NAPRTase family. In terms of processing, transiently phosphorylated on a His residue during the reaction cycle. Phosphorylation strongly increases the affinity for substrates and increases the rate of nicotinate D-ribonucleotide production. Dephosphorylation regenerates the low-affinity form of the enzyme, leading to product release.

It catalyses the reaction nicotinate + 5-phospho-alpha-D-ribose 1-diphosphate + ATP + H2O = nicotinate beta-D-ribonucleotide + ADP + phosphate + diphosphate. Its pathway is cofactor biosynthesis; NAD(+) biosynthesis; nicotinate D-ribonucleotide from nicotinate: step 1/1. Functionally, catalyzes the synthesis of beta-nicotinate D-ribonucleotide from nicotinate and 5-phospho-D-ribose 1-phosphate at the expense of ATP. The chain is Nicotinate phosphoribosyltransferase from Xanthomonas campestris pv. campestris (strain B100).